The following is a 303-amino-acid chain: Tyrosine recombinase XerC (303 aa).

The region spanning 1 to 85 (MRADLDAFLE…ATRGLYQYLL (85 aa)) is the Core-binding (CB) domain. The 180-residue stretch at 106–285 (KLPRTLDADR…DFQHLASVYD (180 aa)) folds into the Tyr recombinase domain. Residues arginine 146, lysine 170, histidine 237, arginine 240, and histidine 263 contribute to the active site. Tyrosine 272 acts as the O-(3'-phospho-DNA)-tyrosine intermediate in catalysis.

This sequence belongs to the 'phage' integrase family. XerC subfamily. As to quaternary structure, forms a cyclic heterotetrameric complex composed of two molecules of XerC and two molecules of XerD.

It is found in the cytoplasm. Functionally, site-specific tyrosine recombinase, which acts by catalyzing the cutting and rejoining of the recombining DNA molecules. The XerC-XerD complex is essential to convert dimers of the bacterial chromosome into monomers to permit their segregation at cell division. It also contributes to the segregational stability of plasmids. This chain is Tyrosine recombinase XerC, found in Pseudomonas aeruginosa (strain LESB58).